Consider the following 920-residue polypeptide: Isoleucine--tRNA ligase (920 aa).

A 'HIGH' region motif is present at residues 58–68; sequence PYANGHLHLGH. Glu569 contacts L-isoleucyl-5'-AMP. Positions 610-614 match the 'KMSKS' region motif; sequence KMSKS. Position 613 (Lys613) interacts with ATP. Zn(2+) is bound by residues Cys895, Cys898, Cys910, and Cys913.

It belongs to the class-I aminoacyl-tRNA synthetase family. IleS type 1 subfamily. In terms of assembly, monomer. Requires Zn(2+) as cofactor.

The protein localises to the cytoplasm. The catalysed reaction is tRNA(Ile) + L-isoleucine + ATP = L-isoleucyl-tRNA(Ile) + AMP + diphosphate. Functionally, catalyzes the attachment of isoleucine to tRNA(Ile). As IleRS can inadvertently accommodate and process structurally similar amino acids such as valine, to avoid such errors it has two additional distinct tRNA(Ile)-dependent editing activities. One activity is designated as 'pretransfer' editing and involves the hydrolysis of activated Val-AMP. The other activity is designated 'posttransfer' editing and involves deacylation of mischarged Val-tRNA(Ile). In Helicobacter pylori (strain G27), this protein is Isoleucine--tRNA ligase.